A 149-amino-acid chain; its full sequence is Transcriptional repressor NrdR (149 aa).

A zinc finger lies at 3–34 (CPFCSATDTKVIDSRLVADGHQVRRRRECAEC). In terms of domain architecture, ATP-cone spans 49-139 (PRVVKQDGSR…VYRAFEDVSE (91 aa)).

It belongs to the NrdR family. Zn(2+) serves as cofactor.

Functionally, negatively regulates transcription of bacterial ribonucleotide reductase nrd genes and operons by binding to NrdR-boxes. The sequence is that of Transcriptional repressor NrdR from Shewanella woodyi (strain ATCC 51908 / MS32).